The chain runs to 287 residues: ATP synthase gamma chain (287 aa).

The protein belongs to the ATPase gamma chain family. As to quaternary structure, F-type ATPases have 2 components, CF(1) - the catalytic core - and CF(0) - the membrane proton channel. CF(1) has five subunits: alpha(3), beta(3), gamma(1), delta(1), epsilon(1). CF(0) has three main subunits: a, b and c.

The protein localises to the cell inner membrane. Functionally, produces ATP from ADP in the presence of a proton gradient across the membrane. The gamma chain is believed to be important in regulating ATPase activity and the flow of protons through the CF(0) complex. The polypeptide is ATP synthase gamma chain (Colwellia psychrerythraea (strain 34H / ATCC BAA-681) (Vibrio psychroerythus)).